Consider the following 424-residue polypeptide: MIDPKLLRTDPDAVRRSQAARGEDSSVVDDVVAADEARREAIAAHENLRAEQKGLGKRIAKASGDEKAELLSRTKTISGEVADLKKAADEADAKFTELAKTLGNIVIDGVPAGGEDEGVIKETVGTPRDFAAEGFEPKDHLEIGEALGAIDMERGTKISGSRFYVLTGVGAQLEFALLNLAMSKAAQWGFTPMIPPALVKPSAMEGTGFLGQAADDVYYLPKDDQYLVGTSEVALAAFHSDEILDDAELPKRYVAFSPCYRREAGSYGKDTRGIFRVHWFDKVEMFVYCLPQEAEAWHEKLLSFEKDFITALQIPFQVLDVASGDLGLSAARKFDCYGWLPTQNRYREITSTSNCTTFQARRLSIRHRGPDGVEPLATLNGTLCAMTRIIIMLLENHQQADGSVRIPEALRPYLGGREFIEPVK.

Over residues 1 to 15 (MIDPKLLRTDPDAVR) the composition is skewed to basic and acidic residues. Residues 1-27 (MIDPKLLRTDPDAVRRSQAARGEDSSV) form a disordered region. Residue 230–232 (TSE) coordinates L-serine. Residues 261–263 (RRE) and valine 277 contribute to the ATP site. Position 284 (glutamate 284) interacts with L-serine. 348–351 (EITS) serves as a coordination point for ATP. Threonine 382 contacts L-serine.

The protein belongs to the class-II aminoacyl-tRNA synthetase family. Type-1 seryl-tRNA synthetase subfamily. As to quaternary structure, homodimer. The tRNA molecule binds across the dimer.

Its subcellular location is the cytoplasm. The catalysed reaction is tRNA(Ser) + L-serine + ATP = L-seryl-tRNA(Ser) + AMP + diphosphate + H(+). The enzyme catalyses tRNA(Sec) + L-serine + ATP = L-seryl-tRNA(Sec) + AMP + diphosphate + H(+). The protein operates within aminoacyl-tRNA biosynthesis; selenocysteinyl-tRNA(Sec) biosynthesis; L-seryl-tRNA(Sec) from L-serine and tRNA(Sec): step 1/1. Its function is as follows. Catalyzes the attachment of serine to tRNA(Ser). Is also able to aminoacylate tRNA(Sec) with serine, to form the misacylated tRNA L-seryl-tRNA(Sec), which will be further converted into selenocysteinyl-tRNA(Sec). This chain is Serine--tRNA ligase, found in Cutibacterium acnes (strain DSM 16379 / KPA171202) (Propionibacterium acnes).